A 436-amino-acid polypeptide reads, in one-letter code: Citrate synthase (436 aa).

Residues His-311 and Asp-370 contribute to the active site.

The protein belongs to the citrate synthase family.

It catalyses the reaction oxaloacetate + acetyl-CoA + H2O = citrate + CoA + H(+). It participates in carbohydrate metabolism; tricarboxylic acid cycle; isocitrate from oxaloacetate: step 1/2. The sequence is that of Citrate synthase (gltA) from Rickettsia typhi (strain ATCC VR-144 / Wilmington).